The primary structure comprises 185 residues: Lactoylglutathione lyase (185 aa).

The interval Met1–Glu21 is disordered. Positions Ile27 to Leu174 constitute a VOC domain. Gln30 and Arg34 together coordinate substrate. Residue Gln30 coordinates Zn(2+). A Zn(2+)-binding site is contributed by Glu96. Residues Asn100, Arg120, His124, and Lys154–Met155 contribute to the substrate site. His124 serves as a coordination point for Zn(2+). Glu170 lines the Zn(2+) pocket. The active-site Proton donor/acceptor is Glu170.

This sequence belongs to the glyoxalase I family. Zn(2+) serves as cofactor.

It carries out the reaction (R)-S-lactoylglutathione = methylglyoxal + glutathione. It participates in secondary metabolite metabolism; methylglyoxal degradation; (R)-lactate from methylglyoxal: step 1/2. Functionally, catalyzes the conversion of hemimercaptal, formed from methylglyoxal and glutathione, to S-lactoylglutathione. The polypeptide is Lactoylglutathione lyase (GLY I) (Brassica juncea (Indian mustard)).